The chain runs to 772 residues: MLSLKKYLTEGLLQFTILLSLIGVRVDVDTYLTSQLPPLREIILGPSSAYTQTQFHNLRNTLDGYGIHPKSIDLDNYFTARRLLSQVRALDRFQVPTTEVNAWLVHRDPEGSVSGSQPNSGLALESSSGLQDVTGPDNGVRESETEQGFGEDLEDLGAVAPPVSGDLTKEDIDLIDILWRQDIDLGAGREVFDYSHRQKEQDVEKELRDGGEQDTWAGEGAEALARNLLVDGETGESFPAQVPSGEDQTALSLEECLRLLEATCPFGENAEFPADISSITEAVPSESEPPALQNNLLSPLLAGTESPFDLEQQWQDLMSIMEMQAMEVNTSASEILYSAPPGDPLSTNYSLAPNTPINQNVSPHQASLGGCSQDFLLFSPEVESLPVASSSTLLPLAPSNSTSLNSTFGSTNLTGLFFPPQLNGTANDTAGPELPDPLGGLLDEAMLDEISLMDLAIEEGFNPVQASQLEEEFDSDSGLSLDSSHSPSSLSSSEGSSSSSSSSSSSSSSASSSASSSFSEEGAVGYSSDSETLDLEEAEGAVGYQPEYSKFCRMSYQDPAQLSCLPYLEHVGHNHTYNMAPSALDSADLPPPSALKKGSKEKLADFLDKQMSRDEHRARAMKIPFTNDKIINLPVEEFNELLSKYQLSEAQLSLIRDIRRRGKNKMAAQNCRKRKLDTILNLERDVEDLQRDKARLLREKVEFLRSLRQMKQKVQSLYQEVFGRLRDENGRPYSPSQYALQYAGDGSVLLIPRTMADQQARRQERKPKDRRK.

Residues tyrosine 7 to valine 24 form a helical; Signal-anchor for type II membrane protein membrane-spanning segment. Residues aspartate 108 to glycine 148 are disordered. The span at valine 113–glutamine 131 shows a compositional bias: polar residues. The tract at residues valine 191–lysine 199 is cholesterol recognition/amino acid consensus (CRAC) region. N-linked (GlcNAc...) asparagine glycosylation is present at asparagine 348. Residues serine 379–glutamate 383 are CPD. N-linked (GlcNAc...) asparagine glycans are attached at residues asparagine 412 and asparagine 423. The tract at residues glutamate 470–threonine 532 is disordered. The Destruction motif motif lies at aspartate 476–serine 480. Low complexity predominate over residues aspartate 476–alanine 523. Serine 528 is subject to Phosphoserine; by CK2. Phosphoserine; by PKA is present on serine 599. The bZIP domain occupies leucine 654 to leucine 717. The basic motif stretch occupies residues arginine 656–lysine 675. Residues leucine 682–leucine 696 are leucine-zipper. The segment at arginine 753–lysine 772 is disordered. The Nuclear localization signal signature appears at arginine 761–lysine 768. The segment covering glutamine 763 to lysine 772 has biased composition (basic residues).

The protein belongs to the bZIP family. CNC subfamily. Interacts with KEAP1. As to quaternary structure, interacts (via CPD region) with FBXW7; leading to its ubiquitination and degradation. Interacts with SYVN1/HRD1; leading to its ubiquitination and degradation. Interacts (when ubiquitinated) with DDI2; leading to its cleavage. In terms of assembly, interacts (via the bZIP domain) with small MAF protein (MAFF, MAFG or MAFK); required for binding to antioxidant response elements (AREs) on DNA. Interacts (via Destruction motif) with BTRC; leading to its ubiquitination and degradation. Interacts with CEBPB; the heterodimer represses expression of DSPP during odontoblast differentiation. Interacts with MOTS-c, a peptide produced by the mitochondrially encoded 12S rRNA MT-RNR1. Post-translationally, cleaved at Leu-104 by the aspartyl protease DDI2 following retrotranslocation, releasing the protein from the endoplasmic reticulum membrane and forming the transcription factor NRF1 that translocates into the nucleus. Ubiquitination is prerequisite for cleavage by aspartyl protease DDI2. In terms of processing, N-glycosylated in normal conditions, when it has a single-pass type II membrane protein topology, with the DNA-binding domain facing the endoplasmic reticulum lumen. Deglycosylated during retrotranslocation to the cytosolic side of the membrane, to have a single-pass type III membrane protein topology with the major part of the protein facing the cytosol. Ubiquitinated by the SCF(FBXW7) complex and SYVN1/HRD1, leading to its degradation by the proteasome. Ubiquitinated during retrotranslocation to the cytosolic side of the membrane: ubiquitination does not lead to degradation and is required for processing by the aspartyl protease DDI2 and subsequent release from the endoplasmic reticulum membrane. Post-translationally, phosphorylation by CK2 at Ser-528 inhibits transcription factor activity, possibly by affecting DNA-binding activity. Phosphorylation at Ser-599 is required for interaction with CEBPB. In terms of processing, ubiquitinated by the SCF(BTRC) complex in the nucleus, leading to its degradation by the proteasome.

The protein resides in the endoplasmic reticulum membrane. Its subcellular location is the nucleus. Its function is as follows. Endoplasmic reticulum membrane sensor that translocates into the nucleus in response to various stresses to act as a transcription factor. Constitutes a precursor of the transcription factor NRF1. Able to detect various cellular stresses, such as cholesterol excess, oxidative stress or proteasome inhibition. In response to stress, it is released from the endoplasmic reticulum membrane following cleavage by the protease DDI2 and translocates into the nucleus to form the transcription factor NRF1. Acts as a key sensor of cholesterol excess: in excess cholesterol conditions, the endoplasmic reticulum membrane form of the protein directly binds cholesterol via its CRAC motif, preventing cleavage and release of the transcription factor NRF1, thereby allowing expression of genes promoting cholesterol removal, such as CD36. Involved in proteasome homeostasis: in response to proteasome inhibition, it is released from the endoplasmic reticulum membrane, translocates to the nucleus and activates expression of genes encoding proteasome subunits. CNC-type bZIP family transcription factor that translocates to the nucleus and regulates expression of target genes in response to various stresses. Heterodimerizes with small-Maf proteins (MAFF, MAFG or MAFK) and binds DNA motifs including the antioxidant response elements (AREs), which regulate expression of genes involved in oxidative stress response. Activates or represses expression of target genes, depending on the context. Plays a key role in cholesterol homeostasis by acting as a sensor of cholesterol excess: in low cholesterol conditions, translocates into the nucleus and represses expression of genes involved in defense against cholesterol excess, such as CD36. In excess cholesterol conditions, the endoplasmic reticulum membrane form of the protein directly binds cholesterol via its CRAC motif, preventing cleavage and release of the transcription factor NRF1, thereby allowing expression of genes promoting cholesterol removal. Critical for redox balance in response to oxidative stress: acts by binding the AREs motifs on promoters and mediating activation of oxidative stress response genes, such as GCLC, GCLM, GSS, MT1 and MT2. Plays an essential role during fetal liver hematopoiesis: probably has a protective function against oxidative stress and is involved in lipid homeostasis in the liver. Involved in proteasome homeostasis: in response to proteasome inhibition, mediates the 'bounce-back' of proteasome subunits by translocating into the nucleus and activating expression of genes encoding proteasome subunits. Also involved in regulating glucose flux. Together with CEBPB; represses expression of DSPP during odontoblast differentiation. In response to ascorbic acid induction, activates expression of SP7/Osterix in osteoblasts. The sequence is that of Endoplasmic reticulum membrane sensor NFE2L1 from Pongo abelii (Sumatran orangutan).